We begin with the raw amino-acid sequence, 256 residues long: Thiazole synthase (256 aa).

The active-site Schiff-base intermediate with DXP is the lysine 95. Residues glycine 156, 182–183, and 204–205 each bind 1-deoxy-D-xylulose 5-phosphate; these read AG and NT.

The protein belongs to the ThiG family. As to quaternary structure, homotetramer. Forms heterodimers with either ThiH or ThiS.

It localises to the cytoplasm. The enzyme catalyses [ThiS sulfur-carrier protein]-C-terminal-Gly-aminoethanethioate + 2-iminoacetate + 1-deoxy-D-xylulose 5-phosphate = [ThiS sulfur-carrier protein]-C-terminal Gly-Gly + 2-[(2R,5Z)-2-carboxy-4-methylthiazol-5(2H)-ylidene]ethyl phosphate + 2 H2O + H(+). The protein operates within cofactor biosynthesis; thiamine diphosphate biosynthesis. In terms of biological role, catalyzes the rearrangement of 1-deoxy-D-xylulose 5-phosphate (DXP) to produce the thiazole phosphate moiety of thiamine. Sulfur is provided by the thiocarboxylate moiety of the carrier protein ThiS. In vitro, sulfur can be provided by H(2)S. The polypeptide is Thiazole synthase (Salmonella arizonae (strain ATCC BAA-731 / CDC346-86 / RSK2980)).